The chain runs to 258 residues: Tryptophan synthase alpha chain (258 aa).

Active-site proton acceptor residues include glutamate 52 and aspartate 63.

The protein belongs to the TrpA family. As to quaternary structure, tetramer of two alpha and two beta chains.

The enzyme catalyses (1S,2R)-1-C-(indol-3-yl)glycerol 3-phosphate + L-serine = D-glyceraldehyde 3-phosphate + L-tryptophan + H2O. The protein operates within amino-acid biosynthesis; L-tryptophan biosynthesis; L-tryptophan from chorismate: step 5/5. Its function is as follows. The alpha subunit is responsible for the aldol cleavage of indoleglycerol phosphate to indole and glyceraldehyde 3-phosphate. The protein is Tryptophan synthase alpha chain of Streptococcus pneumoniae (strain P1031).